Reading from the N-terminus, the 162-residue chain is Shikimate kinase (162 aa).

10-15 (GAGKST) is a binding site for ATP. A Mg(2+)-binding site is contributed by S14. D28, R52, and G73 together coordinate substrate. R113 is a binding site for ATP. R129 is a binding site for substrate.

The protein belongs to the shikimate kinase family. Monomer. Mg(2+) serves as cofactor.

The protein resides in the cytoplasm. It carries out the reaction shikimate + ATP = 3-phosphoshikimate + ADP + H(+). The protein operates within metabolic intermediate biosynthesis; chorismate biosynthesis; chorismate from D-erythrose 4-phosphate and phosphoenolpyruvate: step 5/7. Its function is as follows. Catalyzes the specific phosphorylation of the 3-hydroxyl group of shikimic acid using ATP as a cosubstrate. The polypeptide is Shikimate kinase (Lactococcus lactis subsp. cremoris (strain MG1363)).